Consider the following 355-residue polypeptide: Alanine racemase (355 aa).

The Proton acceptor; specific for D-alanine role is filled by K34. An N6-(pyridoxal phosphate)lysine modification is found at K34. R133 contributes to the substrate binding site. Y249 (proton acceptor; specific for L-alanine) is an active-site residue. M297 provides a ligand contact to substrate.

Belongs to the alanine racemase family. Pyridoxal 5'-phosphate is required as a cofactor.

The catalysed reaction is L-alanine = D-alanine. The protein operates within amino-acid biosynthesis; D-alanine biosynthesis; D-alanine from L-alanine: step 1/1. Catalyzes the interconversion of L-alanine and D-alanine. May also act on other amino acids. The polypeptide is Alanine racemase (alr) (Rickettsia peacockii (strain Rustic)).